A 23-amino-acid polypeptide reads, in one-letter code: Malate dehydrogenase (23 aa).

Asparagine 7 is an NAD(+) binding site. Position 23 (arginine 23) interacts with substrate.

The protein belongs to the LDH/MDH superfamily. MDH type 1 family. As to quaternary structure, homodimer.

It carries out the reaction (S)-malate + NAD(+) = oxaloacetate + NADH + H(+). This chain is Malate dehydrogenase, found in Pseudotsuga menziesii (Douglas-fir).